The sequence spans 212 residues: Small ribosomal subunit protein uS5 (212 aa).

A disordered region spans residues 1-42 (MPGRERRDGGRSADKNDNNKGRNDRGRNDRNNRRGRGRDDDR). The S5 DRBM domain occupies 45 to 108 (YIERVVTINR…EEARKNFFRV (64 aa)).

This sequence belongs to the universal ribosomal protein uS5 family. As to quaternary structure, part of the 30S ribosomal subunit. Contacts proteins S4 and S8.

Functionally, with S4 and S12 plays an important role in translational accuracy. In terms of biological role, located at the back of the 30S subunit body where it stabilizes the conformation of the head with respect to the body. This chain is Small ribosomal subunit protein uS5, found in Corynebacterium kroppenstedtii (strain DSM 44385 / JCM 11950 / CIP 105744 / CCUG 35717).